The chain runs to 570 residues: Serine/threonine-protein kinase Pink1, mitochondrial (570 aa).

The N-terminal 5 residues, 1–5, are a transit peptide targeting the mitochondrion; the sequence is MSVRA. Residues 6-96 are Mitochondrial intermembrane-facing; sequence VGSRLFKHGR…AELRKKATRR (91 aa). A helical transmembrane segment spans residues 97–120; that stretch reads ILFGDSAPFFALVGVSIASGTGIL. Residues 121 to 570 lie on the Cytoplasmic side of the membrane; the sequence is TKEEELEGVC…WIQENLPELD (450 aa). Residues 162–484 form the Protein kinase domain; the sequence is LSLGKPIAKG…VAANVCQLFL (323 aa). Lysine 196 is a binding site for ATP. Serine 205 bears the Phosphoserine; by autocatalysis mark. Glutamate 217 is a Mg(2+) binding site. Residues lysine 295, tyrosine 297, and asparagine 300 each coordinate ATP. Aspartate 337 acts as the Proton acceptor in catalysis. Aspartate 341 contributes to the ATP binding site. Residues asparagine 342 and aspartate 359 each contribute to the Mg(2+) site. Aspartate 359 provides a ligand contact to ATP. Serine 377 carries the phosphoserine; by autocatalysis modification. At threonine 386 the chain carries Phosphothreonine; by autocatalysis. The residue at position 530 (threonine 530) is a Phosphothreonine.

Belongs to the protein kinase superfamily. Ser/Thr protein kinase family. Mg(2+) serves as cofactor. Proteolytically cleaved. In healthy cells, the precursor is continuously imported into mitochondria where it is proteolytically cleaved into its short form by the mitochondrial rhomboid protease rho-7 (TcasGA2_TC013516). The short form is then released into the cytosol where it rapidly undergoes proteasome-dependent degradation. In unhealthy cells, when cellular stress conditions lead to the loss of mitochondrial membrane potential, mitochondrial import is impaired leading to the precursor accumulating on the outer mitochondrial membrane (OMM). Post-translationally, autophosphorylated on Ser-205, which activates kinase activity and is required for substrate recognition. Loss of mitochondrial membrane potential results in the precursor accumulating on the outer mitochondrial membrane (OMM) where it is activated by autophosphorylation at Ser-205. Autophosphorylation is sufficient and essential for selective recruitment of park to depolarized mitochondria, likely via Pink1-dependent phosphorylation of polyubiquitin chains. Also autophosphorylated at Ser-377, Thr-386 and possibly Thr-530. Another report found evidence of autophosphorylation at Ser-154, Thr-186, Thr-218, Ser-267 and Thr-530, as well as a number of other minor sites, but determined that phosphorylation at these sites is not required for enzyme activity and may not occur in vivo.

It localises to the mitochondrion outer membrane. Its subcellular location is the mitochondrion inner membrane. It is found in the cytoplasm. The protein resides in the cytosol. It carries out the reaction L-seryl-[protein] + ATP = O-phospho-L-seryl-[protein] + ADP + H(+). The catalysed reaction is L-threonyl-[protein] + ATP = O-phospho-L-threonyl-[protein] + ADP + H(+). Acts as a serine/threonine-protein kinase. Exhibits a substrate preference for proline at position P+1 and a general preference at several residues for basic residues such as arginine. Also exhibits moderate preferences for a phosphotyrosine at position P-3 and a tryptophan at P-5. Critical to mitochondrial homeostasis it mediates several pathways that maintain mitochondrial health and function. Protects against mitochondrial dysfunction during cellular stress by phosphorylating mitochondrial proteins such as park and likely Drp1, to coordinate mitochondrial quality control mechanisms that remove and replace dysfunctional mitochondrial components. Depending on the severity of mitochondrial damage and/or dysfunction, activity ranges from preventing apoptosis and stimulating mitochondrial biogenesis to regulating mitochondrial dynamics and eliminating severely damaged mitochondria via mitophagy. Appears to be particularly important in maintaining the physiology and function of cells with high energy demands that are undergoing stress or altered metabolic environment, including spermatids, muscle cells and neurons such as the dopaminergic (DA) neurons. Mediates the translocation and activation of park at the outer membrane (OMM) of dysfunctional/depolarized mitochondria. At the OMM of damaged mitochondria, phosphorylates pre-existing polyubiquitin chains, the Pink1-phosphorylated polyubiquitin then recruits park from the cytosol to the OMM where park is fully activated by phosphorylation at 'Ser-80' by Pink1. When cellular stress results in irreversible mitochondrial damage, functions with park to promote the clearance of dysfunctional and/or depolarized mitochondria by selective autophagy (mitophagy). The Pink1-park pathway also promotes fission and/or inhibits fusion of damaged mitochondria, by phosphorylating and thus promoting the park-dependent degradation of proteins involved in mitochondrial fusion/fission such as Marf, Opa1 and fzo. This prevents the refusion of unhealthy mitochondria with the mitochondrial network or initiates mitochondrial fragmentation facilitating their later engulfment by autophagosomes. Also likely to promote mitochondrial fission independently of park and Atg7-mediated mitophagy, via the phosphorylation and activation of Drp1. Regulates motility of damaged mitochondria by phosphorylating Miro which likely promotes its park-dependent degradation by the proteasome; in motor neurons, this inhibits mitochondrial intracellular anterograde transport along the axons which probably increases the chance of the mitochondria being eliminated in the soma. The Pink1-park pathway is also involved in mitochondrial regeneration processes such as promoting mitochondrial biogenesis, activating localized mitochondrial repair, promoting selective turnover of mitochondrial proteins and initiating the mitochondrial import of endogenous proteins. Involved in mitochondrial biogenesis by promoting the park-dependent ubiquitination of transcriptional repressor Paris which leads to its subsequent proteasomal degradation and allows activation of the transcription factor srl. Functions with park to promote localized mitochondrial repair by activating the translation of specific nuclear-encoded mitochondrial RNAs (nc-mtRNAs) on the mitochondrial surface, including several key electron transport chain component nc-mtRNAs. During oogenesis, phosphorylates and inactivates larp on the membrane of defective mitochondria, thus impairing local translation and mtDNA replication and consequently, reducing transmission of deleterious mtDNA mutations to the mature oocyte. Phosphorylates the mitochondrial acyl-CoA dehydrogenase Mcad, and appears to be important for maintaining fatty acid and amino acid metabolism via a mechanism that is independent of it's role in maintaining production of ATP. This chain is Serine/threonine-protein kinase Pink1, mitochondrial, found in Tribolium castaneum (Red flour beetle).